A 513-amino-acid chain; its full sequence is ATP synthase subunit alpha (513 aa).

Residue 171 to 178 (GDRQIGKT) participates in ATP binding.

The protein belongs to the ATPase alpha/beta chains family. F-type ATPases have 2 components, CF(1) - the catalytic core - and CF(0) - the membrane proton channel. CF(1) has five subunits: alpha(3), beta(3), gamma(1), delta(1), epsilon(1). CF(0) has three main subunits: a(1), b(2) and c(9-12). The alpha and beta chains form an alternating ring which encloses part of the gamma chain. CF(1) is attached to CF(0) by a central stalk formed by the gamma and epsilon chains, while a peripheral stalk is formed by the delta and b chains.

Its subcellular location is the cell membrane. The catalysed reaction is ATP + H2O + 4 H(+)(in) = ADP + phosphate + 5 H(+)(out). Its function is as follows. Produces ATP from ADP in the presence of a proton gradient across the membrane. The alpha chain is a regulatory subunit. The protein is ATP synthase subunit alpha of Wolbachia pipientis subsp. Culex pipiens (strain wPip).